We begin with the raw amino-acid sequence, 236 residues long: Outer membrane protein P.III (236 aa).

The signal sequence occupies residues 1-22 (MTKQLKLSALFVALLASGTAVA). Tandem repeats lie at residues 69-70 (VP), 71-72 (EP), 73-74 (EP), and 75-76 (AP). The tract at residues 69–76 (VPEPEPAP) is 4 X 2 AA tandem repeats of X-P. Residues 86–223 (YVDETISLSA…RVDVKIRSIV (138 aa)) form the OmpA-like domain. Residues Cys185 and Cys208 are joined by a disulfide bond.

It belongs to the outer membrane OOP (TC 1.B.6) superfamily.

The protein localises to the cell outer membrane. The polypeptide is Outer membrane protein P.III (Neisseria gonorrhoeae).